The chain runs to 101 residues: Small ribosomal subunit protein uS14 (101 aa).

The disordered stretch occupies residues 1–20 (MAKTSAVEKNKRRRKLVANH). The segment covering 10 to 20 (NKRRRKLVANH) has biased composition (basic residues).

This sequence belongs to the universal ribosomal protein uS14 family. In terms of assembly, part of the 30S ribosomal subunit. Contacts proteins S3 and S10.

Its function is as follows. Binds 16S rRNA, required for the assembly of 30S particles and may also be responsible for determining the conformation of the 16S rRNA at the A site. The protein is Small ribosomal subunit protein uS14 of Sinorhizobium medicae (strain WSM419) (Ensifer medicae).